The chain runs to 388 residues: Ribosomal RNA large subunit methyltransferase F (388 aa).

Residues Met-1–Lys-22 are compositionally biased toward polar residues. The interval Met-1–Ala-51 is disordered. A compositionally biased stretch (basic residues) spans Ile-27–Pro-36.

The protein belongs to the methyltransferase superfamily. METTL16/RlmF family.

The protein localises to the cytoplasm. The catalysed reaction is adenosine(1618) in 23S rRNA + S-adenosyl-L-methionine = N(6)-methyladenosine(1618) in 23S rRNA + S-adenosyl-L-homocysteine + H(+). Its function is as follows. Specifically methylates the adenine in position 1618 of 23S rRNA. This Vibrio campbellii (strain ATCC BAA-1116) protein is Ribosomal RNA large subunit methyltransferase F.